Consider the following 244-residue polypeptide: Derlin-2.1 (244 aa).

At 1–21 (MAQAVEEWYKQMPIITRSYLT) the chain is on the cytoplasmic side. A helical transmembrane segment spans residues 22–42 (AAVVTTVGCSLEIISPYNLYL). The Lumenal portion of the chain corresponds to 43–96 (NPTLVVKQYQFWRLVTNFLYFRKMDLDFLFHMFFLARYCKLLEENSFRGKTADF). The chain crosses the membrane as a helical span at residues 97 to 117 (LYMLLFGATVLTGIVLIGGMI). At 118–121 (PYLS) the chain is on the cytoplasmic side. The chain crosses the membrane as a helical span at residues 122 to 142 (VSFSKIIFLSNSLTFMMVYVW). Topologically, residues 143 to 152 (SKQNPYIHMS) are lumenal. A helical transmembrane segment spans residues 153–173 (FLGLFTFTAAYLPWVLLGFSI). Topologically, residues 174–244 (LVGASAWGDF…HAPFDEIHQD (71 aa)) are cytoplasmic.

It belongs to the derlin family.

It is found in the endoplasmic reticulum membrane. Its function is as follows. May be involved in the degradation process of specific misfolded endoplasmic reticulum (ER) luminal proteins. This is Derlin-2.1 (DER2.1) from Arabidopsis thaliana (Mouse-ear cress).